Reading from the N-terminus, the 243-residue chain is Histone H2B.2 (243 aa).

Ala-2 bears the N,N,N-trimethylalanine; alternate mark. Ala-2 is modified (n,N-dimethylalanine; alternate). Ala-2 carries the post-translational modification N-methylalanine; alternate. Residues 67–145 form a disordered region; the sequence is PDERSLPVGE…KKKKKKKRDD (79 aa). Residues 120 to 132 are compositionally biased toward basic and acidic residues; the sequence is GTLKKTDKVEKKQ. A compositionally biased stretch (basic residues) spans 133-142; that stretch reads ENKKKKKKKK.

Belongs to the histone H2B family. The nucleosome is a histone octamer containing two molecules each of H2A, H2B, H3 and H4 assembled in one H3-H4 heterotetramer and two H2A-H2B heterodimers. The octamer wraps approximately 147 bp of DNA. In terms of processing, can be acetylated to form H2BK6ac.

The protein resides in the nucleus. It is found in the chromosome. Its function is as follows. Core component of nucleosome. Nucleosomes wrap and compact DNA into chromatin, limiting DNA accessibility to the cellular machineries which require DNA as a template. Histones thereby play a central role in transcription regulation, DNA repair, DNA replication and chromosomal stability. DNA accessibility is regulated via a complex set of post-translational modifications of histones, also called histone code, and nucleosome remodeling. The sequence is that of Histone H2B.2 from Arabidopsis thaliana (Mouse-ear cress).